Reading from the N-terminus, the 117-residue chain is MTRTRRGYIARRRRTKIRLFTSSFRGAHSRLTRTITQQKIRALVSTHRDRDRQKRDFRRLWITRINAVIHENGASYSYSRFIHDLYKRQLLLNRKILAQIAISNRNCLYMISNEIIK.

Belongs to the bacterial ribosomal protein bL20 family.

It localises to the plastid. It is found in the chloroplast. In terms of biological role, binds directly to 23S ribosomal RNA and is necessary for the in vitro assembly process of the 50S ribosomal subunit. It is not involved in the protein synthesizing functions of that subunit. The protein is Large ribosomal subunit protein bL20c of Vitis vinifera (Grape).